Here is a 147-residue protein sequence, read N- to C-terminus: UPAR/Ly6 domain-containing protein CG9338 (147 aa).

A signal peptide spans 1–23; the sequence is MVSSVKMILALTVLATVACTGYA. Residues 24 to 126 are Extracellular-facing; sequence IKCYQCDSLT…VCTEDECNGT (103 aa). Cystine bridges form between C26-C72, C29-C37, C51-C89, C101-C115, and C118-C123. N68 carries N-linked (GlcNAc...) asparagine glycosylation. The GPI-anchor amidated asparagine moiety is linked to residue N124. Positions 125–147 are cleaved as a propeptide — removed in mature form; that stretch reads GTSSLAPIAGVILLFFGLARLLA. A helical transmembrane segment spans residues 127–147; that stretch reads SSLAPIAGVILLFFGLARLLA.

The protein belongs to the quiver family.

The protein resides in the cell membrane. Functionally, may be involved in regulating neuron excitability. This chain is UPAR/Ly6 domain-containing protein CG9338, found in Drosophila melanogaster (Fruit fly).